We begin with the raw amino-acid sequence, 375 residues long: Queuine tRNA-ribosyltransferase (375 aa).

The active-site Proton acceptor is D89. Substrate-binding positions include 89–93 (DSGGF), D143, Q187, and G214. The tract at residues 245 to 251 (GVGKPED) is RNA binding. Residue D264 is the Nucleophile of the active site. The RNA binding; important for wobble base 34 recognition stretch occupies residues 269–273 (TRNAR). Zn(2+) contacts are provided by C302, C304, C307, and H333.

It belongs to the queuine tRNA-ribosyltransferase family. In terms of assembly, homodimer. Within each dimer, one monomer is responsible for RNA recognition and catalysis, while the other monomer binds to the replacement base PreQ1. It depends on Zn(2+) as a cofactor.

The enzyme catalyses 7-aminomethyl-7-carbaguanine + guanosine(34) in tRNA = 7-aminomethyl-7-carbaguanosine(34) in tRNA + guanine. The protein operates within tRNA modification; tRNA-queuosine biosynthesis. Catalyzes the base-exchange of a guanine (G) residue with the queuine precursor 7-aminomethyl-7-deazaguanine (PreQ1) at position 34 (anticodon wobble position) in tRNAs with GU(N) anticodons (tRNA-Asp, -Asn, -His and -Tyr). Catalysis occurs through a double-displacement mechanism. The nucleophile active site attacks the C1' of nucleotide 34 to detach the guanine base from the RNA, forming a covalent enzyme-RNA intermediate. The proton acceptor active site deprotonates the incoming PreQ1, allowing a nucleophilic attack on the C1' of the ribose to form the product. After dissociation, two additional enzymatic reactions on the tRNA convert PreQ1 to queuine (Q), resulting in the hypermodified nucleoside queuosine (7-(((4,5-cis-dihydroxy-2-cyclopenten-1-yl)amino)methyl)-7-deazaguanosine). The protein is Queuine tRNA-ribosyltransferase of Salmonella enteritidis PT4 (strain P125109).